The following is a 607-amino-acid chain: ATP-dependent DNA helicase II subunit 1 (607 aa).

The region spanning 241 to 452 is the Ku domain; the sequence is MDLGNDVRIG…IETMQRILRG (212 aa). The SAP domain maps to 570–604; the sequence is IKALKVSQLKDILRDRGLRVSGKKADLLDNLTNYV.

This sequence belongs to the ku70 family. Heterodimer of pku70 and pku80.

The protein localises to the nucleus. It is found in the chromosome. The protein resides in the telomere. It carries out the reaction ATP + H2O = ADP + phosphate + H(+). Functionally, single-stranded DNA-dependent ATP-dependent helicase. Involved in non-homologous end joining (NHEJ) DNA double strand break repair. DNA-binding is sequence-independent but has a high affinity to nicks in double-stranded DNA and to the ends of duplex DNA. Binds to naturally occurring chromosomal ends, and therefore provides chromosomal end protection. Required also for telomere recombination to repair telomeric ends in the absence of telomerase. ku70, of the ku70/ku80 heterodimer, binds to the stem loop of tlc1, the RNA component of telomerase. Required for mating-type switching. Involved in telomere maintenance. Interacts with telomeric repeats and subtelomeric sequences thereby controlling telomere length and protecting against subtelomeric rearrangement. Maintains telomeric chromatin, which is involved in silencing the expression of genes located at the telomere. In Schizosaccharomyces pombe (strain 972 / ATCC 24843) (Fission yeast), this protein is ATP-dependent DNA helicase II subunit 1 (pku70).